We begin with the raw amino-acid sequence, 172 residues long: Putative phosphoesterase BCG9842_B4061 (172 aa).

The Proton donor role is filled by His34. 2 consecutive short sequence motifs (HXTX) follow at residues 34–37 (HITL) and 115–118 (HLTI). The active-site Proton acceptor is the His115.

Belongs to the 2H phosphoesterase superfamily. YjcG family.

The chain is Putative phosphoesterase BCG9842_B4061 from Bacillus cereus (strain G9842).